A 342-amino-acid chain; its full sequence is Ferredoxin--NADP reductase (342 aa).

FAD-binding residues include Cys-17, Asp-36, Gln-44, Tyr-49, Ile-89, Phe-124, Asp-289, and Thr-330.

This sequence belongs to the ferredoxin--NADP reductase type 2 family. In terms of assembly, homodimer. Requires FAD as cofactor.

The catalysed reaction is 2 reduced [2Fe-2S]-[ferredoxin] + NADP(+) + H(+) = 2 oxidized [2Fe-2S]-[ferredoxin] + NADPH. The sequence is that of Ferredoxin--NADP reductase from Rhodopseudomonas palustris (strain BisA53).